Here is a 76-residue protein sequence, read N- to C-terminus: Exodeoxyribonuclease 7 small subunit (76 aa).

Belongs to the XseB family. In terms of assembly, heterooligomer composed of large and small subunits.

It is found in the cytoplasm. It catalyses the reaction Exonucleolytic cleavage in either 5'- to 3'- or 3'- to 5'-direction to yield nucleoside 5'-phosphates.. Its function is as follows. Bidirectionally degrades single-stranded DNA into large acid-insoluble oligonucleotides, which are then degraded further into small acid-soluble oligonucleotides. This chain is Exodeoxyribonuclease 7 small subunit, found in Geobacter sulfurreducens (strain ATCC 51573 / DSM 12127 / PCA).